A 376-amino-acid polypeptide reads, in one-letter code: Chaperone protein DnaJ (376 aa).

The J domain maps to 5 to 70 (DFYETLGVAK…QKRAAYDRYG (66 aa)). The CR-type zinc-finger motif lies at 137–215 (GKTAQIRVPT…CHGQGRVTEE (79 aa)). Zn(2+) contacts are provided by cysteine 150, cysteine 153, cysteine 167, cysteine 170, cysteine 189, cysteine 192, cysteine 203, and cysteine 206. CXXCXGXG motif repeat units follow at residues 150-157 (CDVCSGSG), 167-174 (CGTCQGSG), 189-196 (CPTCHGRG), and 203-210 (CPKCHGQG).

This sequence belongs to the DnaJ family. Homodimer. It depends on Zn(2+) as a cofactor.

It localises to the cytoplasm. Its function is as follows. Participates actively in the response to hyperosmotic and heat shock by preventing the aggregation of stress-denatured proteins and by disaggregating proteins, also in an autonomous, DnaK-independent fashion. Unfolded proteins bind initially to DnaJ; upon interaction with the DnaJ-bound protein, DnaK hydrolyzes its bound ATP, resulting in the formation of a stable complex. GrpE releases ADP from DnaK; ATP binding to DnaK triggers the release of the substrate protein, thus completing the reaction cycle. Several rounds of ATP-dependent interactions between DnaJ, DnaK and GrpE are required for fully efficient folding. Also involved, together with DnaK and GrpE, in the DNA replication of plasmids through activation of initiation proteins. The polypeptide is Chaperone protein DnaJ (Rhizobium leguminosarum bv. trifolii (strain WSM2304)).